A 591-amino-acid chain; its full sequence is MLSNKRISLIKVLPIPSNKKNVFKINCSSNTTIITTSSTTTTSGIKSYSTHNRSNNDTHTSKSNTIDQHQQQQPQQHQNNDNKHLFTPTPFQSLVKNVNKPFRNDKDPDYLPTHHSVLNMSLDQLIEMYKNRKVVDLSHVPTLDPQDVFINSELKLEEIDVFGFDYDYTLANYGDQVQHLIYDLAMSHLVDEQKYPMALKEIKYDPTFAIRGLHFDVNHGLLMKLDYLNNIQAGAIYHGRRPLTKEEVIQIYGSMQLKRLYCDSFLKPMSDIFCLPEACLIANTIQYLTDHNLAFEPRIIHEDVTAAVGKVHLGGGLHNKIISDFPLYLNKHPLLGEFLLKLKSHGKKLFLLTNNSYFYANHGMKYLLNDQLNGKYEDWTDVFDVIITKCDKPSFFGKGRPFRMYHPDSDRYDWNEVNHFEPKKVYVGGSLKQFTNVSKWRGRSVMYFGDHLYSDLVEPSQKEGWKTGVIIKELEVEVGIQNSPKYREQLAELLQLEDVIRKCQFFSGEKKELFLEQLKTERYKKRLALKEPFNANFGSLFRTHTNATIFASSLQRHADIYTSKIENLISYPLTASLIPSRNYLPHEFKLN.

Composition is skewed to low complexity over residues 38–50 (STTT…SYST) and 68–78 (QHQQQQPQQHQ). A disordered region spans residues 38-88 (STTTTSGIKSYSTHNRSNNDTHTSKSNTIDQHQQQQPQQHQNNDNKHLFTP). The Nucleophile role is filled by D165. The Mg(2+) site is built by D165 and D167. The active-site Proton donor is the D167. 305–313 (TAAVGKVHL) is a binding site for substrate. A Mg(2+)-binding site is contributed by D450.

It belongs to the 5'(3')-deoxyribonucleotidase family. Mg(2+) serves as cofactor.

This is 5'-nucleotidase domain-containing protein DDB_G0275467 from Dictyostelium discoideum (Social amoeba).